The following is an 829-amino-acid chain: Ectonucleotide pyrophosphatase/phosphodiesterase C27A7.1 (829 aa).

The helical; Signal-anchor for type II membrane protein transmembrane segment at 54-74 threads the bilayer; sequence VIGIAVLLLAMVVIVVIVLLL. The active-site Nucleophile is threonine 224. Residues asparagine 296, asparagine 424, asparagine 514, asparagine 542, asparagine 582, asparagine 649, asparagine 733, and asparagine 748 are each glycosylated (N-linked (GlcNAc...) asparagine). Cysteine 439 and cysteine 782 form a disulfide bridge.

It belongs to the nucleotide pyrophosphatase/phosphodiesterase family.

It is found in the membrane. In terms of biological role, probable phosphodiesterase. In Caenorhabditis elegans, this protein is Ectonucleotide pyrophosphatase/phosphodiesterase C27A7.1.